We begin with the raw amino-acid sequence, 71 residues long: MTQLLLFLVALLVLGHVPSGRSEFKRCWKGQGACRTYCTRQETYMHLCPDASLCCLSYALKPPPVPKHEYE.

Positions 1 to 22 are cleaved as a signal peptide; that stretch reads MTQLLLFLVALLVLGHVPSGRS. 3 disulfides stabilise this stretch: Cys-27–Cys-54, Cys-34–Cys-48, and Cys-38–Cys-55.

It belongs to the beta-defensin family.

It is found in the secreted. Its function is as follows. Has antibacterial activity. The protein is Beta-defensin 124 (DEFB124) of Pan troglodytes (Chimpanzee).